The sequence spans 492 residues: MGSSSATANRFLLSKIATSEGHGENSPYFDGWKAYDRNPFHPTKNPEGVIQMGLAENQLSFDSIEDWIKKNPKASICTPEGVEEFKNVAIFQDYHGFPEFRKAVAMFMSKARGGRVTFDPNRVVMSGGATGANELVMFCLADPGDAFLVPSPYYPAFFRDLGWRTGVQIVPVDCDSSNNFKITKEALEAAYEKAQKNNINVKGLIITNPSNPLGTTLDRNTLESLVEFINQKNIHLVCDEIYAATVFSSPTFTCISEVIQNMNCNPNLIHIVYSLSKDMGLPGLRVGIVYSYNDDVVNIGRKMSSFGLVSSQTQHMLPSMLLDEEFVARFLETSPKRLAKRHGVFTKGLEEVGINCLKSNAGLFCWMDLRRLLEDQTFDGEMVLWRVIVNEVGPNVSPGSSFKCVEPGWFRVCFANMDDETLEVALKRIRTFVRQGKKAQDQVVQVKSPKRWKSNLRLSFSSSSTRRFDQESVNVLSPHMMSPHSPLVRAKT.

Lys277 is modified (N6-(pyridoxal phosphate)lysine).

It belongs to the class-I pyridoxal-phosphate-dependent aminotransferase family. Homodimer. The cofactor is pyridoxal 5'-phosphate.

The catalysed reaction is S-adenosyl-L-methionine = 1-aminocyclopropane-1-carboxylate + S-methyl-5'-thioadenosine + H(+). It functions in the pathway alkene biosynthesis; ethylene biosynthesis via S-adenosyl-L-methionine; ethylene from S-adenosyl-L-methionine: step 1/2. Functionally, catalyzes the formation of 1-aminocyclopropane-1-carboxylate, a direct precursor of ethylene in higher plants. The chain is 1-aminocyclopropane-1-carboxylate synthase 1 (ACS1) from Prunus mume (Japanese apricot).